Reading from the N-terminus, the 490-residue chain is MKEVDENSNVELFEVKLKPILGIEPKVYVFLTTIILLLSLISTLIIIPKFKNPGAYLKINSNIENTYIYLNEKYIGRTPLNKYINATEGVLRAKRMGFKTYEQRIKIHNKFFGNYSLQINLELVDPEKIIKQRQKELSIMVKIKNINENTKLIPVFSLISSELKEHPKYIKKFLKDSIPYLNSTEMFKDFLNSYKAIYSIDQDNSNQEEIWNSLKTNFDLENRAIFWFLENLDKDLKILTKNAPWVKTLAKTLDNENIQLISKNEKINIKLPGFKKINSNKIEKIQNYELNSLDSKNISLKSTYNVKEFLIQEQNVTKYEYQDFLKENPKWALNNKENLIKEQLVDENYLKNFNQIGLNEAITGISYFSAIEYANWYSKKLPTGFKARLPISQEWELYQKEPNKNPLNINEISKKVGFWNLMQNSSFNEIAIFKNEKNFYSENSNFYSLITEIRTYSQQNNNLLNASTKASFLKNWSSPNIGFRLIVSKE.

The chain crosses the membrane as a helical span at residues 27–47; the sequence is VYVFLTTIILLLSLISTLIII.

The protein resides in the membrane. This is an uncharacterized protein from Borreliella burgdorferi (strain ATCC 35210 / DSM 4680 / CIP 102532 / B31) (Borrelia burgdorferi).